Reading from the N-terminus, the 292-residue chain is Glutamyl-Q tRNA(Asp) synthetase (292 aa).

Residues 11–15 (RFAPS) and E47 contribute to the L-glutamate site. Residues 14–24 (PSPTGPLHFGS) carry the 'HIGH' region motif. The Zn(2+) site is built by C103, C105, Y116, and C120. L-glutamate contacts are provided by Y173 and R191. A 'KMSKS' region motif is present at residues 229 to 233 (KLSKQ). K232 lines the ATP pocket.

Belongs to the class-I aminoacyl-tRNA synthetase family. GluQ subfamily. Zn(2+) serves as cofactor.

Catalyzes the tRNA-independent activation of glutamate in presence of ATP and the subsequent transfer of glutamate onto a tRNA(Asp). Glutamate is transferred on the 2-amino-5-(4,5-dihydroxy-2-cyclopenten-1-yl) moiety of the queuosine in the wobble position of the QUC anticodon. In Acinetobacter baylyi (strain ATCC 33305 / BD413 / ADP1), this protein is Glutamyl-Q tRNA(Asp) synthetase.